The following is a 1989-amino-acid chain: Zinc finger C3H1 domain-containing protein (1989 aa).

4 disordered regions span residues 1-133 (MATA…RPSF), 148-218 (GRPY…SKNE), 251-290 (SSKE…PEEK), and 310-365 (LPGD…LGED). Alanine 2 bears the N-acetylalanine mark. Residues serine 15, serine 28, and serine 34 each carry the phosphoserine modification. The segment covering 20-32 (GELEDGEISDDDN) has biased composition (acidic residues). Over residues 33–44 (NSQIRSRSSSSS) the composition is skewed to low complexity. Over residues 62–72 (RGGGSGGGGGS) the composition is skewed to gly residues. Composition is skewed to low complexity over residues 114–132 (PPSV…PRPS), 183–192 (GFSSSQSWRE), and 201–210 (KSFGRSPSRK). The residue at position 128 (serine 128) is a Phosphoserine. The stretch at 219–259 (NCVEETFEDLLLKYKQIQLELECINKDEKLALSSKEENVQE) forms a coiled coil. Serine 251 is modified (phosphoserine). Basic and acidic residues predominate over residues 251–262 (SSKEENVQEDPK). The segment covering 266 to 279 (FEDQTSTDNVSITK) has biased composition (polar residues). Residues 280–290 (DSSKEVAPEEK) show a composition bias toward basic and acidic residues. Polar residues predominate over residues 330-340 (KSDTTDSSQGL). Phosphoserine is present on residues serine 352 and serine 383. Positions 358-389 (SEKKLGEDEEELSELQLRLLALQSASKKWQQK) form a coiled coil. Disordered regions lie at residues 385-671 (KWQQ…SNLS) and 711-770 (LNDS…PEAL). Residues 392-402 (QVMKESKEKLT) show a composition bias toward basic and acidic residues. Over residues 430–440 (ALRKQQTKAWK) the composition is skewed to basic residues. Residues 432-487 (RKQQTKAWKKLQQQKEQERQKEEDQRKQAEEEERRKREEEIRKIRDLSNQEEQYNR) adopt a coiled-coil conformation. 2 stretches are compositionally biased toward basic and acidic residues: residues 444-479 (QQKE…RDLS) and 501-515 (KSSD…DKQP). Residues 527 to 537 (NYEEVAMDTDS) show a composition bias toward acidic residues. Over residues 574–583 (VSSLPPLSQP) the composition is skewed to low complexity. Pro residues predominate over residues 594-616 (PLPPLPPLPPLPPEDPEQPPKPP). Residues 647-671 (TSSNSDPPSPPVLNNSHPVPRSNLS) are compositionally biased toward polar residues. A phosphoserine mark is found at serine 662, serine 714, serine 717, and serine 719. Over residues 755–770 (PKSEKENDPLRTPEAL) the composition is skewed to basic and acidic residues. Threonine 766 carries the post-translational modification Phosphothreonine. A phosphoserine mark is found at serine 805 and serine 809. Residues 847 to 909 (LKNLVQQEAK…QQRVTIKKAL (63 aa)) are a coiled coil. Phosphoserine is present on residues serine 948, serine 949, and serine 953. Positions 965–989 (EKRRLQKLEYEYALKIQKLKEARAL) form a coiled coil. Phosphoserine is present on residues serine 998 and serine 1046. Residues 1185–1206 (FCRFDLTGTCNDDDCQWQHIQD) form a C3H1-type zinc finger. Phosphoserine occurs at positions 1301, 1303, and 1304. TPR repeat units follow at residues 1361-1400 (VQLW…NKDN), 1401-1434 (PEIW…APDY), 1438-1471 (WTFL…ETSN), 1478-1511 (LEAL…ANDG), 1602-1635 (LPLY…CPIN), 1636-1669 (CQLL…NPQN), and 1745-1778 (PYLW…AMRC).

In terms of assembly, component of the poly(A) tail exosome targeting (PAXT) complex made of accessory factors, such as PABPN1, ZFC3H1 and MTREX, and which directs a subset of long and polyadenylated poly(A) RNAs for exosomal degradation. Co-localizes with component of the CBC-ARS2 (CBCA) complex. Binds to RNA exosome components. Interacts with NCBP1/CBP80, ZC3H18, MTREX and PABPN1 in a RNase-insensitive manner, and with PABPC4, PABPC1 and ZC3H14 in a RNase-sensitive manner.

The protein localises to the nucleus. Its function is as follows. Subunit of the trimeric poly(A) tail exosome targeting (PAXT) complex, a complex that directs a subset of long and polyadenylated poly(A) RNAs for exosomal degradation. The RNA exosome is fundamental for the degradation of RNA in eukaryotic nuclei. Substrate targeting is facilitated by its cofactor MTREX, which links to RNA-binding protein adapters. The chain is Zinc finger C3H1 domain-containing protein (ZFC3H1) from Homo sapiens (Human).